Here is a 371-residue protein sequence, read N- to C-terminus: MSSAPHDPFYSSPFGPFYRRHTPYMVQPEYRIYEMNKRLQARSEDSDNLWWDAFATEFFEDDATLTLSFCLEDGPKRYTIGRTLIPRYFSTVFEGGVTDLYYILKHSKESYHNSSITVDCDQCTMVTQHGKPMFTKVCTEGRLILEFTFDDLMRIKTWHFTIRQYRELVPRSILPMHAQDPQVLEQLSKNITRMGLTNFTLNYLRLCVILEPMQELMSRHKTYNLSPRDCLKTCLFQKWQRMVAPPAEPTRQPTTKRRKRKNSTSSTSNSSAGNNANSTNSKKKSAAANLSLSSQDVMVVGEPTLMGGEFGDEDERLITRLENTQYDAANGMDDEEDFNNSPALGNNSPWNSKPPANQETKSENPTPQASQ.

2 disordered regions span residues 244-289 (APPA…AAAN) and 325-371 (QYDA…QASQ). The span at 263-289 (STSSTSNSSAGNNANSTNSKKKSAAAN) shows a compositional bias: low complexity. One can recognise an LIM interaction domain (LID) domain in the interval 296 to 335 (DVMVVGEPTLMGGEFGDEDERLITRLENTQYDAANGMDDE). The segment covering 339 to 371 (NNSPALGNNSPWNSKPPANQETKSENPTPQASQ) has biased composition (polar residues).

It belongs to the LDB family. In terms of tissue distribution, first expressed at stages 15-16 in presumptive limb mesoderm. As limb outgrowth proceeds, expressed in the entire limb bud, concentrating in the distal mesoderm throughout limb development. Both hindlimbs and forelimbs exhibit similar expression patterns.

It is found in the nucleus. Functionally, binds to the LIM domain of a wide variety of LIM domain-containing transcription factors. This is LIM domain-binding protein 2 (LDB2) from Gallus gallus (Chicken).